A 590-amino-acid polypeptide reads, in one-letter code: tRNA-guanine(15) transglycosylase (590 aa).

The active-site Nucleophile is Asp90. Asp125 contacts substrate. Zn(2+) is bound by residues Cys278, Cys280, and Cys283. The 76-residue stretch at 502 to 577 (KGRVVVKGLF…HPFIIIRRHV (76 aa)) folds into the PUA domain.

Belongs to the archaeosine tRNA-ribosyltransferase family. The cofactor is Zn(2+).

The catalysed reaction is guanosine(15) in tRNA + 7-cyano-7-deazaguanine = 7-cyano-7-carbaguanosine(15) in tRNA + guanine. The protein operates within tRNA modification; archaeosine-tRNA biosynthesis. Functionally, exchanges the guanine residue with 7-cyano-7-deazaguanine (preQ0) at position 15 in the dihydrouridine loop (D-loop) of archaeal tRNAs. This chain is tRNA-guanine(15) transglycosylase, found in Korarchaeum cryptofilum (strain OPF8).